An 816-amino-acid chain; its full sequence is Sucrose synthase 2 (816 aa).

Serine 15 is subject to Phosphoserine. The segment at 280-757 is GT-B glycosyltransferase; that stretch reads MVFNVVILSP…GLQRIEEKYT (478 aa).

It belongs to the glycosyltransferase 1 family. Plant sucrose synthase subfamily.

The enzyme catalyses an NDP-alpha-D-glucose + D-fructose = a ribonucleoside 5'-diphosphate + sucrose + H(+). Functionally, sucrose-cleaving enzyme that provides UDP-glucose and fructose for various metabolic pathways. In Zea mays (Maize), this protein is Sucrose synthase 2 (SUS1).